A 430-amino-acid polypeptide reads, in one-letter code: UDP-N-acetylglucosamine 1-carboxyvinyltransferase (430 aa).

Position 22-23 (22-23 (KN)) interacts with phosphoenolpyruvate. R102 is a UDP-N-acetyl-alpha-D-glucosamine binding site. C126 acts as the Proton donor in catalysis. C126 carries the post-translational modification 2-(S-cysteinyl)pyruvic acid O-phosphothioketal. Residues 131 to 135 (RPVDL), 172 to 175 (KVSV), D317, and I339 contribute to the UDP-N-acetyl-alpha-D-glucosamine site.

This sequence belongs to the EPSP synthase family. MurA subfamily.

The protein resides in the cytoplasm. It catalyses the reaction phosphoenolpyruvate + UDP-N-acetyl-alpha-D-glucosamine = UDP-N-acetyl-3-O-(1-carboxyvinyl)-alpha-D-glucosamine + phosphate. The protein operates within cell wall biogenesis; peptidoglycan biosynthesis. In terms of biological role, cell wall formation. Adds enolpyruvyl to UDP-N-acetylglucosamine. This Rhizobium meliloti (strain 1021) (Ensifer meliloti) protein is UDP-N-acetylglucosamine 1-carboxyvinyltransferase.